Consider the following 605-residue polypeptide: uncharacterized protein (605 aa).

A disordered region spans residues 111–151 (VNVNDGKPNDIELSSTSKTENDPPLSLHTTPDDLQGNGVNV).

It localises to the golgi apparatus. This is an uncharacterized protein from Schizosaccharomyces pombe (strain 972 / ATCC 24843) (Fission yeast).